Reading from the N-terminus, the 318-residue chain is Thymidylate synthase (318 aa).

DUMP contacts are provided by residues Arg-25 and 180–181 (RR). Residue Cys-200 is the Nucleophile of the active site. Residues 220-223 (RSGD), Asn-231, and 261-263 (HIY) each bind dUMP. A (6R)-5,10-methylene-5,6,7,8-tetrahydrofolate-binding site is contributed by Asp-223. (6R)-5,10-methylene-5,6,7,8-tetrahydrofolate is bound at residue Ala-317.

It belongs to the thymidylate synthase family. Bacterial-type ThyA subfamily. As to quaternary structure, homodimer.

Its subcellular location is the cytoplasm. The catalysed reaction is dUMP + (6R)-5,10-methylene-5,6,7,8-tetrahydrofolate = 7,8-dihydrofolate + dTMP. It participates in pyrimidine metabolism; dTTP biosynthesis. Catalyzes the reductive methylation of 2'-deoxyuridine-5'-monophosphate (dUMP) to 2'-deoxythymidine-5'-monophosphate (dTMP) while utilizing 5,10-methylenetetrahydrofolate (mTHF) as the methyl donor and reductant in the reaction, yielding dihydrofolate (DHF) as a by-product. This enzymatic reaction provides an intracellular de novo source of dTMP, an essential precursor for DNA biosynthesis. This is Thymidylate synthase from Lactobacillus delbrueckii subsp. bulgaricus (strain ATCC BAA-365 / Lb-18).